We begin with the raw amino-acid sequence, 428 residues long: Sulfhydrogenase 1 subunit alpha (428 aa).

Ni(2+) is bound by residues C65, C68, C418, and C421. Position 68 (C68) interacts with Fe cation. C421 is a binding site for Fe cation.

The protein belongs to the [NiFe]/[NiFeSe] hydrogenase large subunit family. As to quaternary structure, heterotetramer of alpha, beta, gamma and delta subunits. The nickel-containing alpha and delta subunits constitute the hydrogenase activity. The beta and gamma subunits (flavin-containing dimer) constitute the sulfur reductase activity. Ni(2+) serves as cofactor. Requires Fe cation as cofactor.

The protein resides in the cytoplasm. It carries out the reaction H2 + NADP(+) = NADPH + H(+). Its function is as follows. Part of a bifunctional enzyme complex that functions as an NADPH-dependent hydrogen-evolving hydrogenase with sulfur-reducing activity. May play a role in hydrogen cycling during fermentative growth. Activity not exhibited with NAD. The alpha and delta subunits form the hydrogenase component that catalyzes the reduction of protons to evolve hydrogen. This Pyrococcus furiosus (strain ATCC 43587 / DSM 3638 / JCM 8422 / Vc1) protein is Sulfhydrogenase 1 subunit alpha.